Reading from the N-terminus, the 225-residue chain is Chromosome partition protein MukE (225 aa).

Residues 197 to 225 form a disordered region; it reads RDGEAMPIENHLQLNDETEESQPDSGEEE. Residues 212–225 show a composition bias toward acidic residues; sequence DETEESQPDSGEEE.

It belongs to the MukE family. Interacts, and probably forms a ternary complex, with MukF and MukB. The complex formation is stimulated by calcium or magnesium.

Its subcellular location is the cytoplasm. It is found in the nucleoid. Involved in chromosome condensation, segregation and cell cycle progression. May participate in facilitating chromosome segregation by condensation DNA from both sides of a centrally located replisome during cell division. Probably acts via its interaction with MukB and MukF. The sequence is that of Chromosome partition protein MukE from Salmonella typhi.